The sequence spans 176 residues: Japanin-like-RS (176 aa).

The signal sequence occupies residues 1-24; sequence MKVLLCLVCSFYIIVSSITTMTTG. 2 cysteine pairs are disulfide-bonded: C52–C174 and C138–C162. Residue N155 is glycosylated (N-linked (GlcNAc...) asparagine).

It belongs to the calycin superfamily. Lipocalin family. As to quaternary structure, homodimer; non-disulfide-linked. Each monomer accommodates one molecule of cholesterol in a pocket. As to expression, expressed in salivary glands.

Its subcellular location is the secreted. In terms of biological role, salivary tick protein that modulates host immune response. This protein blocks dendritic cell (DC) differentiation from monocytes. In addition, it inhibits up-regulation of costimulatory molecules and pro-inflammatory cytokines in response to stimuli and promotes up-regulation of co-inhibitory molecules and the anti-inflammatory cytokine interleukin-10. It has a pocket to accomodate cholesterol, which may have immune-modulatory roles, either directly or through interactions with the host gut microbiota. This Rhipicephalus sanguineus (Brown dog tick) protein is Japanin-like-RS.